The following is a 206-amino-acid chain: Pyridoxine/pyridoxamine 5'-phosphate oxidase (206 aa).

FMN-binding positions include 53–58 (RMVLLK), 68–69 (YT), Lys-75, and Gln-97. Lys-58 provides a ligand contact to substrate. The substrate site is built by Tyr-115, Arg-119, and Ser-123. Residues 132 to 133 (QS) and Trp-177 each bind FMN. 183–185 (RLH) is a substrate binding site. Residue Arg-187 coordinates FMN.

It belongs to the pyridoxamine 5'-phosphate oxidase family. As to quaternary structure, homodimer. FMN is required as a cofactor.

It catalyses the reaction pyridoxamine 5'-phosphate + O2 + H2O = pyridoxal 5'-phosphate + H2O2 + NH4(+). The enzyme catalyses pyridoxine 5'-phosphate + O2 = pyridoxal 5'-phosphate + H2O2. It functions in the pathway cofactor metabolism; pyridoxal 5'-phosphate salvage; pyridoxal 5'-phosphate from pyridoxamine 5'-phosphate: step 1/1. The protein operates within cofactor metabolism; pyridoxal 5'-phosphate salvage; pyridoxal 5'-phosphate from pyridoxine 5'-phosphate: step 1/1. Its function is as follows. Catalyzes the oxidation of either pyridoxine 5'-phosphate (PNP) or pyridoxamine 5'-phosphate (PMP) into pyridoxal 5'-phosphate (PLP). This Allorhizobium ampelinum (strain ATCC BAA-846 / DSM 112012 / S4) (Agrobacterium vitis (strain S4)) protein is Pyridoxine/pyridoxamine 5'-phosphate oxidase.